Here is a 280-residue protein sequence, read N- to C-terminus: Ribosomal RNA small subunit methyltransferase A (280 aa).

Positions 11, 13, 37, 57, 85, and 106 each coordinate S-adenosyl-L-methionine.

This sequence belongs to the class I-like SAM-binding methyltransferase superfamily. rRNA adenine N(6)-methyltransferase family. RsmA subfamily.

It localises to the cytoplasm. It catalyses the reaction adenosine(1518)/adenosine(1519) in 16S rRNA + 4 S-adenosyl-L-methionine = N(6)-dimethyladenosine(1518)/N(6)-dimethyladenosine(1519) in 16S rRNA + 4 S-adenosyl-L-homocysteine + 4 H(+). Functionally, specifically dimethylates two adjacent adenosines (A1518 and A1519) in the loop of a conserved hairpin near the 3'-end of 16S rRNA in the 30S particle. May play a critical role in biogenesis of 30S subunits. The polypeptide is Ribosomal RNA small subunit methyltransferase A (Campylobacter concisus (strain 13826)).